A 184-amino-acid polypeptide reads, in one-letter code: ESX-1 secretion-associated protein EspD (184 aa).

The tract at residues 33-56 (IGVGSAATPDTGPDLDNAHGQAET) is disordered.

It localises to the secreted. Its function is as follows. Required for ESX-1 function. Required for the maintenance of adequate cellular levels of both EspA and EspC. Facilitates EsxA secretion. The protein is ESX-1 secretion-associated protein EspD of Mycobacterium tuberculosis (strain CDC 1551 / Oshkosh).